The primary structure comprises 492 residues: Glutamate--tRNA ligase (492 aa).

Residues 13–23 (PSPTGTPHVGM) carry the 'HIGH' region motif. A 'KMSKS' region motif is present at residues 257–261 (KLSKR). An ATP-binding site is contributed by Lys260.

The protein belongs to the class-I aminoacyl-tRNA synthetase family. Glutamate--tRNA ligase type 1 subfamily. As to quaternary structure, monomer.

Its subcellular location is the cytoplasm. The catalysed reaction is tRNA(Glu) + L-glutamate + ATP = L-glutamyl-tRNA(Glu) + AMP + diphosphate. Catalyzes the attachment of glutamate to tRNA(Glu) in a two-step reaction: glutamate is first activated by ATP to form Glu-AMP and then transferred to the acceptor end of tRNA(Glu). The protein is Glutamate--tRNA ligase of Mycolicibacterium paratuberculosis (strain ATCC BAA-968 / K-10) (Mycobacterium paratuberculosis).